The sequence spans 265 residues: Tryptophan synthase alpha chain (265 aa).

Residues E49 and D60 each act as proton acceptor in the active site.

This sequence belongs to the TrpA family. Tetramer of two alpha and two beta chains.

It carries out the reaction (1S,2R)-1-C-(indol-3-yl)glycerol 3-phosphate + L-serine = D-glyceraldehyde 3-phosphate + L-tryptophan + H2O. The protein operates within amino-acid biosynthesis; L-tryptophan biosynthesis; L-tryptophan from chorismate: step 5/5. Its function is as follows. The alpha subunit is responsible for the aldol cleavage of indoleglycerol phosphate to indole and glyceraldehyde 3-phosphate. The protein is Tryptophan synthase alpha chain of Desulfatibacillum aliphaticivorans.